The chain runs to 391 residues: Inhibin beta B chain (391 aa).

Positions Met1–Ala25 are cleaved as a signal peptide. The propeptide occupies Thr26 to Arg276. The disordered stretch occupies residues Pro27–Arg47. A glycan (N-linked (GlcNAc...) asparagine) is linked at Asn77. 4 disulfide bridges follow: Cys280-Cys288, Cys287-Cys356, Cys316-Cys388, and Cys320-Cys390.

The protein belongs to the TGF-beta family. In terms of assembly, dimeric, linked by one or more disulfide bonds. Inhibin A is a dimer of alpha and beta-A. Inhibin B is a dimer of alpha and beta-B. Activin A is a homodimer of beta-A. Activin B is a homodimer of beta-B. Activin AB is a dimer of beta-A and beta-B.

The protein localises to the secreted. In terms of biological role, inhibins and activins inhibit and activate, respectively, the secretion of follitropin by the pituitary gland. Inhibins/activins are involved in regulating a number of diverse functions such as hypothalamic and pituitary hormone secretion, gonadal hormone secretion, germ cell development and maturation, erythroid differentiation, insulin secretion, nerve cell survival, embryonic axial development or bone growth, depending on their subunit composition. Inhibins appear to oppose the functions of activins. The polypeptide is Inhibin beta B chain (INHBB) (Gallus gallus (Chicken)).